A 515-amino-acid polypeptide reads, in one-letter code: Bifunctional NAD(P)H-hydrate repair enzyme Nnr (515 aa).

The segment at 1 to 227 is NAD(P)H-hydrate epimerase; that stretch reads MTDHTMKKNP…GLDSWLAGQE (227 aa). The YjeF N-terminal domain occupies 23-225; the sequence is IRRGEREAAD…SLGLDSWLAG (203 aa). The NADPHX 1; for epimerase activity stretch occupies residues 71–75; it reads NNGGD. K(+) is bound by residues Asn72 and Asp135. The tract at residues 139-145 is NADPHX 1; for epimerase activity; it reads GTGLRQA. Asp168 contributes to the (6S)-NADPHX binding site. Residue Ser171 coordinates K(+). Residues 234-501 enclose the YjeF C-terminal domain; it reads SAEQLSHWLK…STLQRIVNPE (268 aa). The segment at 235–515 is ADP-dependent (S)-NAD(P)H-hydrate dehydratase; it reads AEQLSHWLKP…NHDESSNSAP (281 aa). Gly329 serves as a coordination point for (6S)-NADPHX. Residues 375–381 are NADPHX 2; for dehydratase activity; sequence HPGEAAR. Residues 412–416 and 432–441 contribute to the ADP site; these read KGAGT and NAGMASGGMG. Asp442 contributes to the (6S)-NADPHX binding site.

The protein in the N-terminal section; belongs to the NnrE/AIBP family. This sequence in the C-terminal section; belongs to the NnrD/CARKD family. Requires K(+) as cofactor.

The catalysed reaction is (6S)-NADHX + ADP = AMP + phosphate + NADH + H(+). It carries out the reaction (6S)-NADPHX + ADP = AMP + phosphate + NADPH + H(+). The enzyme catalyses (6R)-NADHX = (6S)-NADHX. It catalyses the reaction (6R)-NADPHX = (6S)-NADPHX. In terms of biological role, bifunctional enzyme that catalyzes the epimerization of the S- and R-forms of NAD(P)HX and the dehydration of the S-form of NAD(P)HX at the expense of ADP, which is converted to AMP. This allows the repair of both epimers of NAD(P)HX, a damaged form of NAD(P)H that is a result of enzymatic or heat-dependent hydration. The polypeptide is Bifunctional NAD(P)H-hydrate repair enzyme Nnr (nnr) (Escherichia coli (strain K12)).